We begin with the raw amino-acid sequence, 478 residues long: Cytochrome c-552 (478 aa).

The signal sequence occupies residues 1–26 (MARKTLRARRFFSLIFPFFFITSVYA). His94 is a binding site for heme c. Residues Cys122, Cys125, and Lys126 each contribute to the heme site. Positions 160, 163, 164, 209, 212, and 213 each coordinate heme c. Ca(2+) is bound by residues Glu215, Tyr216, Lys261, and Gln263. Tyr216 lines the substrate pocket. His264 lines the substrate pocket. His275, Cys282, Cys285, His286, His301, Cys314, Cys317, His318, and His393 together coordinate heme c.

Belongs to the cytochrome c-552 family. Requires Ca(2+) as cofactor. The cofactor is heme c.

It is found in the periplasm. It catalyses the reaction 6 Fe(III)-[cytochrome c] + NH4(+) + 2 H2O = 6 Fe(II)-[cytochrome c] + nitrite + 8 H(+). Its pathway is nitrogen metabolism; nitrate reduction (assimilation). Its function is as follows. Catalyzes the reduction of nitrite to ammonia, consuming six electrons in the process. This is Cytochrome c-552 from Salmonella paratyphi A (strain ATCC 9150 / SARB42).